The sequence spans 979 residues: Zinc finger BED domain-containing protein 6 (979 aa).

Residues 1–89 (MSVCTLSVPV…ILAKKFSKDL (89 aa)) are required for nucleolar localization. The BED-type 1 zinc-finger motif lies at 130–187 (AKTSIVWHFFHVDPQYTWRAICNLCEKSVSRGKPGSHLGTSTLQRHLQARHSPHWTRA). Residues C151, C154, H175, and H180 each coordinate Zn(2+). Residues 207 to 232 (PSSGSNGSFEYIPTDPLDDNRMGKKH) are disordered. The BED-type 2 zinc-finger motif lies at 264-321 (AKTSAVWNFFYTDPQHISRAVCNICKRSVSRGRPGSHLGTSTLQRHLQATHPIHWAVA). Residues C285, C288, H309, and H314 each coordinate Zn(2+). The disordered stretch occupies residues 333-383 (DEAETERSDLLSDTLHGEKSTGSQDLTAEDLSDSDSDEPMLEVENRSESPI). Residues 337 to 351 (TERSDLLSDTLHGEK) are compositionally biased toward basic and acidic residues. A compositionally biased stretch (acidic residues) spans 359-373 (TAEDLSDSDSDEPML). A Phosphoserine modification is found at S381. The segment at 866–948 (VVDEYFKEKY…EQLMFLKMNL (83 aa)) is HATC (Hobo-Ac-Tam3) domain.

Expressed in pancreatic islet cells (at protein level).

It is found in the nucleus. Its subcellular location is the nucleolus. The protein resides in the cytoplasm. Functionally, transcriptional repressor which binds to the consensus sequence 5'-GCTCGC-3', transcription regulation may be tissue-specific. Regulates the expression of target genes such as: IGF2, PGAP6/TMEM8, ENHO, and PIANP. Acts as a transcriptional repressor of growth factor IGF2, thereby negatively regulating postnatal growth of muscles and internal organs, especially in females. Negatively regulates myoblast differentiation and myoblast mitochondrial activity via its regulation of IGF2 transcription. Negatively regulates the cell cycle of myoblasts, potentially via transcriptional regulation of the E2F family of transcription factors such as: E2F1 and E2F2. Positively regulates the cell cycle and survival of pancreatic beta cells. Binds to the CDH2 gene and may directly repress CDH2 transcription. Probably by controlling CDH2 expression, regulates pancreatic beta cell adhesion, and formation of cell-to-cell junctions between pancreatic beta cells and neural crest stem cells. May also play a role in embryonic beta cell differentiation. May play a role in insulin sensitivity and glucose clearance. This Homo sapiens (Human) protein is Zinc finger BED domain-containing protein 6.